We begin with the raw amino-acid sequence, 326 residues long: 3-methyl-2-oxobutanoate hydroxymethyltransferase 1 (326 aa).

Positions 52, 91, and 122 each coordinate Mg(2+). Residues 52-53 (DS) and aspartate 91 contribute to the 3-methyl-2-oxobutanoate site. Glutamate 189 acts as the Proton acceptor in catalysis.

This sequence belongs to the PanB family. As to quaternary structure, homodecamer; pentamer of dimers. The cofactor is Mg(2+).

It is found in the cytoplasm. The enzyme catalyses 3-methyl-2-oxobutanoate + (6R)-5,10-methylene-5,6,7,8-tetrahydrofolate + H2O = 2-dehydropantoate + (6S)-5,6,7,8-tetrahydrofolate. Its pathway is cofactor biosynthesis; (R)-pantothenate biosynthesis; (R)-pantoate from 3-methyl-2-oxobutanoate: step 1/2. Catalyzes the reversible reaction in which hydroxymethyl group from 5,10-methylenetetrahydrofolate is transferred onto alpha-ketoisovalerate to form ketopantoate. This Bradyrhizobium diazoefficiens (strain JCM 10833 / BCRC 13528 / IAM 13628 / NBRC 14792 / USDA 110) protein is 3-methyl-2-oxobutanoate hydroxymethyltransferase 1.